The following is an 890-amino-acid chain: ATP-dependent DNA helicase DDX11 (890 aa).

Residues K4–L424 enclose the Helicase ATP-binding domain. ATP is bound at residue S39–S46. The span at L71–N85 shows a compositional bias: basic and acidic residues. 2 disordered regions span residues L71–W95 and E176–D199. C246, C264, C294, and C329 together coordinate [4Fe-4S] cluster. The short motif at D372–H375 is the DEAH box element.

Belongs to the DEAD box helicase family. DEAH subfamily. DDX11/CHL1 sub-subfamily. [4Fe-4S] cluster is required as a cofactor.

The protein localises to the nucleus. The protein resides in the nucleolus. Its subcellular location is the cytoplasm. It is found in the cytoskeleton. It localises to the spindle pole. The protein localises to the midbody. The protein resides in the microtubule organizing center. Its subcellular location is the centrosome. It carries out the reaction Couples ATP hydrolysis with the unwinding of duplex DNA at the replication fork by translocating in the 5'-3' direction. This creates two antiparallel DNA single strands (ssDNA). The leading ssDNA polymer is the template for DNA polymerase III holoenzyme which synthesizes a continuous strand.. The catalysed reaction is ATP + H2O = ADP + phosphate + H(+). In terms of biological role, DNA-dependent ATPase and ATP-dependent DNA helicase that participates in various functions in genomic stability, including DNA replication, DNA repair and heterochromatin organization as well as in ribosomal RNA synthesis. Plays a role in DNA double-strand break (DSB) repair at the DNA replication fork during DNA replication recovery from DNA damage. Plays a role in the regulation of sister chromatid cohesion and mitotic chromosome segregation. Stimulates 5'-single-stranded DNA flap endonuclease activity of FEN1 in an ATP- and helicase-independent manner. Also plays a role in heterochromatin organization. Involved in rRNA transcription activation through binding to active hypomethylated rDNA gene loci by recruiting UBTF and the RNA polymerase Pol I transcriptional machinery. Plays a role in embryonic development. Associates with chromatin at DNA replication fork regions. Binds to single- and double-stranded DNAs. In Danio rerio (Zebrafish), this protein is ATP-dependent DNA helicase DDX11.